The sequence spans 415 residues: DNA polymerase IV 2 (415 aa).

The region spanning 7–183 (ILHADLDAFY…LPVSLMWGVG (177 aa)) is the UmuC domain. Positions 11 and 101 each coordinate Mg(2+). The active site involves glutamate 102.

The protein belongs to the DNA polymerase type-Y family. As to quaternary structure, monomer. The cofactor is Mg(2+).

It is found in the cytoplasm. It catalyses the reaction DNA(n) + a 2'-deoxyribonucleoside 5'-triphosphate = DNA(n+1) + diphosphate. In terms of biological role, poorly processive, error-prone DNA polymerase involved in untargeted mutagenesis. Copies undamaged DNA at stalled replication forks, which arise in vivo from mismatched or misaligned primer ends. These misaligned primers can be extended by PolIV. Exhibits no 3'-5' exonuclease (proofreading) activity. May be involved in translesional synthesis, in conjunction with the beta clamp from PolIII. The polypeptide is DNA polymerase IV 2 (dinB2) (Mesorhizobium japonicum (strain LMG 29417 / CECT 9101 / MAFF 303099) (Mesorhizobium loti (strain MAFF 303099))).